A 266-amino-acid polypeptide reads, in one-letter code: Ribonuclease HII (266 aa).

Residues 19-38 (HPGMIRDKEKPAPTKPGKGV) form a disordered region. The region spanning 58-246 (WPVAGCDEAG…VVAARQKHQP (189 aa)) is the RNase H type-2 domain. A divalent metal cation-binding residues include D64, E65, and D155.

Belongs to the RNase HII family. Mn(2+) is required as a cofactor. Mg(2+) serves as cofactor.

The protein resides in the cytoplasm. The enzyme catalyses Endonucleolytic cleavage to 5'-phosphomonoester.. Its function is as follows. Endonuclease that specifically degrades the RNA of RNA-DNA hybrids. The protein is Ribonuclease HII of Rhodopseudomonas palustris (strain BisB18).